Reading from the N-terminus, the 299-residue chain is Putative S-adenosyl-L-methionine-dependent methyltransferase MAB_0027c (299 aa).

Residues Asp126 and 155-156 each bind S-adenosyl-L-methionine; that span reads DL.

It belongs to the UPF0677 family.

In terms of biological role, exhibits S-adenosyl-L-methionine-dependent methyltransferase activity. The chain is Putative S-adenosyl-L-methionine-dependent methyltransferase MAB_0027c from Mycobacteroides abscessus (strain ATCC 19977 / DSM 44196 / CCUG 20993 / CIP 104536 / JCM 13569 / NCTC 13031 / TMC 1543 / L948) (Mycobacterium abscessus).